A 299-amino-acid chain; its full sequence is Bifunctional protein FolD (299 aa).

NADP(+) contacts are provided by residues 168 to 170 (GRS), S193, and I234.

The protein belongs to the tetrahydrofolate dehydrogenase/cyclohydrolase family. Homodimer.

The enzyme catalyses (6R)-5,10-methylene-5,6,7,8-tetrahydrofolate + NADP(+) = (6R)-5,10-methenyltetrahydrofolate + NADPH. It catalyses the reaction (6R)-5,10-methenyltetrahydrofolate + H2O = (6R)-10-formyltetrahydrofolate + H(+). It participates in one-carbon metabolism; tetrahydrofolate interconversion. Catalyzes the oxidation of 5,10-methylenetetrahydrofolate to 5,10-methenyltetrahydrofolate and then the hydrolysis of 5,10-methenyltetrahydrofolate to 10-formyltetrahydrofolate. The chain is Bifunctional protein FolD from Bartonella bacilliformis (strain ATCC 35685 / KC583 / Herrer 020/F12,63).